The primary structure comprises 821 residues: V-type proton ATPase subunit a3 (821 aa).

N-acetylalanine is present on Ala-2. The Cytoplasmic portion of the chain corresponds to 2 to 421 (AESGGGGGCC…ANPGVFTIVT (420 aa)). A coiled-coil region spans residues 97-144 (KENDIDLDDVEVKLGELEAELVEINANNDKLQRSYNELMEYKLVLQKA). Ser-174 carries the post-translational modification Phosphoserine. A helical transmembrane segment spans residues 422–442 (FPFLFAVMFGDWGHGICILLA). At 443–469 (TMYLILKEKKLASQKLGDIMEMAFGGR) the chain is on the vacuolar side. The helical transmembrane segment at 470 to 490 (YVILMMSLFSIYTGLIYNEFF) threads the bilayer. The Cytoplasmic portion of the chain corresponds to 491 to 548 (SIPFPLFAPSAYDCRDVSCSEATTIGLIKVRDTYPFGLDPVWHGSRSELPFLNSLKMK). The chain crosses the membrane as a helical span at residues 549–569 (MSILLGVSQMNLGIIMSYFNA). Topologically, residues 570–581 (RFFKSSVNIWFQ) are vacuolar. A helical transmembrane segment spans residues 582–602 (FIPQMIFLNSLFGYLSVLIII). At 603-640 (KWCTGSQADLYHVMIYMFLSPMDELGENQLFPHQKTLQ) the chain is on the cytoplasmic side. The helical transmembrane segment at 641–661 (LVLLFLALVSVPCMLLPKPFI) threads the bilayer. Residues 662–758 (LKKQHEARHQ…LLLAWGYNNP (97 aa)) lie on the Vacuolar side of the membrane. A helical transmembrane segment spans residues 759 to 779 (LILIVGVLVFIFATVGVLLVM). Residues 780–821 (ETLSAFLHALRLHWVEFQNKFYEGDGYKFAPFTFIFTANEDE) are Cytoplasmic-facing.

Belongs to the V-ATPase 116 kDa subunit family. As to quaternary structure, V-ATPase is a heteromultimeric enzyme composed of a peripheral catalytic V1 complex (components A to H) attached to an integral membrane V0 proton pore complex (components: a, c, c'', d and e). As to expression, expressed in etiolated seedlings hypocotyls.

The protein localises to the vacuole membrane. Its function is as follows. Essential component of the vacuolar proton pump (V-ATPase), a multimeric enzyme that catalyzes the translocation of protons across the membranes. Required for assembly and activity of the V-ATPase. Involved in vacuolar nutrient storage (e.g. accumulation and storage of nitrate) and in tolerance to some toxic ions (e.g. zinc ions sequestration in vacuoles). The sequence is that of V-type proton ATPase subunit a3 (VHA-a3) from Arabidopsis thaliana (Mouse-ear cress).